The sequence spans 295 residues: Probable protein phosphatase 2C 6 (295 aa).

The PPM-type phosphatase domain occupies 23 to 294 (QYAATHMQGW…DNMTCILIQF (272 aa)). Mn(2+)-binding residues include D57, G58, D237, and D285.

This sequence belongs to the PP2C family. Mg(2+) is required as a cofactor. It depends on Mn(2+) as a cofactor.

The protein resides in the membrane. The catalysed reaction is O-phospho-L-seryl-[protein] + H2O = L-seryl-[protein] + phosphate. The enzyme catalyses O-phospho-L-threonyl-[protein] + H2O = L-threonyl-[protein] + phosphate. Functionally, enzyme with a broad specificity. The polypeptide is Probable protein phosphatase 2C 6 (Paramecium tetraurelia).